The chain runs to 147 residues: 3-dehydroquinate dehydratase (147 aa).

Catalysis depends on Y23, which acts as the Proton acceptor. Substrate-binding residues include N74, H80, and D87. H100 functions as the Proton donor in the catalytic mechanism. Substrate-binding positions include 101–102 and R111; that span reads LS.

The protein belongs to the type-II 3-dehydroquinase family. In terms of assembly, homododecamer.

It carries out the reaction 3-dehydroquinate = 3-dehydroshikimate + H2O. The protein operates within metabolic intermediate biosynthesis; chorismate biosynthesis; chorismate from D-erythrose 4-phosphate and phosphoenolpyruvate: step 3/7. Functionally, catalyzes a trans-dehydration via an enolate intermediate. The protein is 3-dehydroquinate dehydratase of Clostridium botulinum (strain ATCC 19397 / Type A).